Consider the following 95-residue polypeptide: Scorpine-like peptide Smp76 (95 aa).

The signal sequence occupies residues 1 to 19 (MNCKLTALLFLGLIVIASC). The region spanning 55–95 (EFQCVANVDTLGNCKKHCAKTTGEKGYCHGTKCKCGIELSY) is the BetaSPN-type CS-alpha/beta domain. Cystine bridges form between Cys-58–Cys-82, Cys-68–Cys-87, and Cys-72–Cys-89.

In terms of processing, disulfide bonds are critical for antiviral function, and their disruption inhibit viral activity. Expressed by the venom gland.

It localises to the secreted. Functionally, antibacterial peptide. Dose-dependently inhibits Dengue virus (DENV), Zika virus (ZIKV) and Hepatitis C virus (HCV) infections. Two mechanisms of action have been described by two different groups: one involving activity on extracellular particles, and the other regulating the immune system. On Dengue virus (DENV), Zika virus (ZIKV), suppress the established viral infection, similar to the effect of interferon (IFN)-beta. Mechanistically, upregulates the expression of IFN-beta by activating interferon regulatory transcription factor 3 (IRF3) phosphorylation. On HCV and DENV, acts by inactivating extra-cellular infectious particles without affecting viral replication. Shows very weak inhibition on measles virus. Is neither toxic nor hemolytic in vitro at high concentrations. The sequence is that of Scorpine-like peptide Smp76 from Scorpio palmatus (Israeli golden scorpion).